Here is a 406-residue protein sequence, read N- to C-terminus: Probable endo-xylogalacturonan hydrolase A (406 aa).

A signal peptide spans Met-1 to Ala-18. 4 PbH1 repeats span residues Ala-183–Ser-213, Ser-214–Pro-235, Cys-237–Ser-257, and Val-299–Ser-320. The Proton donor role is filled by Asp-228. Asn-244 carries N-linked (GlcNAc...) asparagine glycosylation. The active site involves His-251. N-linked (GlcNAc...) asparagine glycosylation occurs at Asn-301.

It belongs to the glycosyl hydrolase 28 family.

It is found in the secreted. Functionally, pectinolytic enzyme involved in the degradation of xylogalacturonan (xga), a galacturonan backbone heavily substituted with xylose, and which is one important component of the hairy regions of pectin. Activity requires a galacturonic acid backbone substituted with xylose. In Neosartorya fischeri (strain ATCC 1020 / DSM 3700 / CBS 544.65 / FGSC A1164 / JCM 1740 / NRRL 181 / WB 181) (Aspergillus fischerianus), this protein is Probable endo-xylogalacturonan hydrolase A (xghA).